A 35-amino-acid polypeptide reads, in one-letter code: Apolipophorin-3 (35 aa).

As to quaternary structure, equilibrium between a soluble monomer and a bound lipoprotein form. Apolipophorin-3 associates with lipophorin during lipid loading until each particle contains 9 or 14 molecules of apolipophorin-3. Hemolymph.

The protein localises to the secreted. In terms of biological role, assists in the loading of diacylglycerol, generated from triacylglycerol stores in the fat body through the action of adipokinetic hormone, into lipophorin, the hemolymph lipoprotein. It increases the lipid carrying capacity of lipophorin by covering the expanding hydrophobic surface resulting from diacylglycerol uptake. It thus plays a critical role in the transport of lipids during flight in several species of insects. Has hemagglutinating activity towards rabbit erythrocytes. The polypeptide is Apolipophorin-3 (Heliothis virescens (Tobacco budworm moth)).